We begin with the raw amino-acid sequence, 343 residues long: UPF0283 membrane protein blr7254 (343 aa).

3 consecutive transmembrane segments (helical) span residues Gly64–Val84, Leu97–Gly117, and Ile214–Leu234.

The protein belongs to the UPF0283 family.

Its subcellular location is the cell inner membrane. The protein is UPF0283 membrane protein blr7254 of Bradyrhizobium diazoefficiens (strain JCM 10833 / BCRC 13528 / IAM 13628 / NBRC 14792 / USDA 110).